The sequence spans 506 residues: Transforming growth factor beta-1-induced transcript 1 protein (506 aa).

The short motif at 3–15 (DLDALLADLQITT) is the LD motif 1 element. The disordered stretch occupies residues 15–62 (TPPRCPVLLTDSPEKPQPTETRPPPPPYDPKTAMSNKTSDHETFPVDK). Over residues 52–62 (TSDHETFPVDK) the composition is skewed to basic and acidic residues. 2 consecutive short sequence motifs (LD motif) follow at residues 87-99 (ELDR…NATQ) and 139-150 (ELDRLMASLSDF). 2 disordered regions span residues 154–201 (NTVS…PTPK) and 221–244 (SDEV…ATSV). Residues 168–177 (GSEEVSRPGD) show a composition bias toward basic and acidic residues. Positions 248-260 (DLDSMLVKLQSGL) match the LD motif 4 motif. LIM zinc-binding domains follow at residues 271–330 (GLCE…LYAP), 331–388 (RCAL…RLFG), 389–448 (AVCA…RRGS), and 449–506 (LCAG…RLYG).

It belongs to the paxillin family. As to quaternary structure, interacts with tcf3 and tcf7l2.

The protein resides in the cell junction. Its subcellular location is the focal adhesion. The protein localises to the nucleus matrix. It localises to the cytoplasm. It is found in the cytoskeleton. Functions as a molecular adapter coordinating multiple protein-protein interactions at the focal adhesion complex and in the nucleus. May regulate both Wnt and steroid signaling pathways and play a role in the processes of cell growth, proliferation, migration, differentiation and senescence. May have a zinc-dependent DNA-binding activity. This is Transforming growth factor beta-1-induced transcript 1 protein (tgfb1i1) from Xenopus laevis (African clawed frog).